The chain runs to 313 residues: S-methyl-5'-thioadenosine phosphorylase (313 aa).

Residues Thr20, 68-69 (RH), and 101-102 (SA) each bind phosphate. Met203 is a substrate binding site. Ser204 contacts phosphate. Substrate is bound at residue 227 to 229 (DYD).

The protein belongs to the PNP/MTAP phosphorylase family. MTAP subfamily. In terms of assembly, homotrimer.

Its subcellular location is the cytoplasm. It localises to the nucleus. The catalysed reaction is S-methyl-5'-thioadenosine + phosphate = 5-(methylsulfanyl)-alpha-D-ribose 1-phosphate + adenine. The protein operates within amino-acid biosynthesis; L-methionine biosynthesis via salvage pathway; S-methyl-5-thio-alpha-D-ribose 1-phosphate from S-methyl-5'-thioadenosine (phosphorylase route): step 1/1. Catalyzes the reversible phosphorylation of S-methyl-5'-thioadenosine (MTA) to adenine and 5-methylthioribose-1-phosphate. Involved in the breakdown of MTA, a major by-product of polyamine biosynthesis. Responsible for the first step in the methionine salvage pathway after MTA has been generated from S-adenosylmethionine. Has broad substrate specificity with 6-aminopurine nucleosides as preferred substrates. The polypeptide is S-methyl-5'-thioadenosine phosphorylase (Ajellomyces capsulatus (strain G186AR / H82 / ATCC MYA-2454 / RMSCC 2432) (Darling's disease fungus)).